The sequence spans 106 residues: Cell division protein FtsB (106 aa).

Residues 1–3 (MGK) lie on the Cytoplasmic side of the membrane. Residues 4–21 (LTLLLLVLLGWLQYSLWL) traverse the membrane as a helical segment. Topologically, residues 22–106 (GKNGIHDFVR…GTPSTQNNAQ (85 aa)) are periplasmic. Residues 31 to 62 (RVKEDVAAQEANNSTLKARNDQLFAEIDDLNG) adopt a coiled-coil conformation.

The protein belongs to the FtsB family. In terms of assembly, part of a complex composed of FtsB, FtsL and FtsQ.

The protein resides in the cell inner membrane. Its function is as follows. Essential cell division protein. May link together the upstream cell division proteins, which are predominantly cytoplasmic, with the downstream cell division proteins, which are predominantly periplasmic. The chain is Cell division protein FtsB from Yersinia pseudotuberculosis serotype O:1b (strain IP 31758).